A 515-amino-acid polypeptide reads, in one-letter code: METSILKTAVKNFLGNSPDWYKLAIIIFLIINPLIFFFINPFVTGWLLVIEFIFTLAMALKCYPLQPGGLLAIEAVIIGMTSPQQVGHEIANNLEVVLLLIFMVAGIYFMKQLLLFAFTKLLLSIKSKRMLALAFCLASAFLSAFLDALTVIAVVISVSLGFYSIYNNFITDQNDVINAKHDNHIDTAKKKQTLEQFRAFLRSLMMHAGVGTALGGVMTMVGEPQNLIIAKNVNWDFVTFFIRMAPITLPVFICGLLVCFLVEHFKLFGYGTELPERVRQVLEDYDKKTSAKRTHKEKAQLIAQALIGIWLIVALAFHLAEVGLIGLSVIILTTSFCGITEEHALGKAFEEALPFTALLTVFFSIVAVIVDQQLFTPFIQFVLQVSETSQLSLFYLFNGLLSSVSDNVFVGTVYINEARTAMQEGLISHKQFEYLAVAINTGTNLPSVATPNGQAAFLFLLTSTLSPLIRLSYGRMVIMALPYTIVMTLVGLLCVEFLLIPVTDMMVHWGLIALP.

The next 11 membrane-spanning stretches (helical) occupy residues 23-43, 45-65, 96-116, 136-156, 204-224, 245-265, 305-325, 349-369, 393-413, 449-469, and 480-500; these read LAII…NPFV, GWLL…CYPL, VVLL…LLLF, CLAS…AVVI, LMMH…VGEP, APIT…VEHF, ALIG…VGLI, FEEA…VAVI, LFYL…VGTV, ATPN…SPLI, and ALPY…FLLI.

This sequence belongs to the NhaB Na(+)/H(+) (TC 2.A.34) antiporter family.

The protein localises to the cell inner membrane. The enzyme catalyses 2 Na(+)(in) + 3 H(+)(out) = 2 Na(+)(out) + 3 H(+)(in). Functionally, na(+)/H(+) antiporter that extrudes sodium in exchange for external protons. The polypeptide is Na(+)/H(+) antiporter NhaB (Photorhabdus laumondii subsp. laumondii (strain DSM 15139 / CIP 105565 / TT01) (Photorhabdus luminescens subsp. laumondii)).